A 193-amino-acid polypeptide reads, in one-letter code: Adenylate kinase (193 aa).

Residue 10 to 18 participates in ATP binding; the sequence is GVPGVGGTT.

This sequence belongs to the archaeal adenylate kinase family. As to quaternary structure, monomer.

It is found in the cytoplasm. The catalysed reaction is AMP + ATP = 2 ADP. This is Adenylate kinase from Methanococcus aeolicus (strain ATCC BAA-1280 / DSM 17508 / OCM 812 / Nankai-3).